The following is a 72-amino-acid chain: Translation initiation factor IF-1 (72 aa).

An S1-like domain is found at 1–72 (MAKDDVIVVD…DKGRITHRYK (72 aa)).

This sequence belongs to the IF-1 family. Component of the 30S ribosomal translation pre-initiation complex which assembles on the 30S ribosome in the order IF-2 and IF-3, IF-1 and N-formylmethionyl-tRNA(fMet); mRNA recruitment can occur at any time during PIC assembly.

It localises to the cytoplasm. Its function is as follows. One of the essential components for the initiation of protein synthesis. Stabilizes the binding of IF-2 and IF-3 on the 30S subunit to which N-formylmethionyl-tRNA(fMet) subsequently binds. Helps modulate mRNA selection, yielding the 30S pre-initiation complex (PIC). Upon addition of the 50S ribosomal subunit IF-1, IF-2 and IF-3 are released leaving the mature 70S translation initiation complex. This is Translation initiation factor IF-1 from Aliarcobacter butzleri (strain RM4018) (Arcobacter butzleri).